A 302-amino-acid polypeptide reads, in one-letter code: tRNA dimethylallyltransferase (302 aa).

2–9 (GPTACGKS) is an ATP binding site. 4–9 (TACGKS) contacts substrate. 2 interaction with substrate tRNA regions span residues 27-30 (DSAL) and 149-153 (QRLIR).

It belongs to the IPP transferase family. Monomer. It depends on Mg(2+) as a cofactor.

It catalyses the reaction adenosine(37) in tRNA + dimethylallyl diphosphate = N(6)-dimethylallyladenosine(37) in tRNA + diphosphate. Its function is as follows. Catalyzes the transfer of a dimethylallyl group onto the adenine at position 37 in tRNAs that read codons beginning with uridine, leading to the formation of N6-(dimethylallyl)adenosine (i(6)A). This Buchnera aphidicola subsp. Acyrthosiphon pisum (strain 5A) protein is tRNA dimethylallyltransferase.